The primary structure comprises 100 residues: Large ribosomal subunit protein eL14 (100 aa).

It belongs to the eukaryotic ribosomal protein eL14 family.

This chain is Large ribosomal subunit protein eL14, found in Aeropyrum pernix (strain ATCC 700893 / DSM 11879 / JCM 9820 / NBRC 100138 / K1).